The primary structure comprises 322 residues: Nodulation protein Z (322 aa).

The GT23 domain maps to 1–314 (MYNRYVLSRR…NDPSRLVVIE (314 aa)).

Belongs to the glycosyltransferase 23 family.

Fucosyltransferase which adds the fucose moiety of the nod factor on its terminal reducing N-acetylglucosamine end. Uses GDP-fucose as the donor group. This chain is Nodulation protein Z (nodZ), found in Sinorhizobium fredii (strain NBRC 101917 / NGR234).